The following is an 806-amino-acid chain: Volume-regulated anion channel subunit LRRC8E (806 aa).

The Cytoplasmic segment spans residues 1–22 (MIPVAEFKQFTEQQPAFKVLKP). The helical transmembrane segment at 23-43 (WWDVLAEYITYAMLMIGVFGC) threads the bilayer. The Extracellular portion of the chain corresponds to 44-130 (TLQVTQDKII…YETALHWYAK (87 aa)). Cysteines 54 and 311 form a disulfide. N-linked (GlcNAc...) asparagine glycosylation is found at asparagine 57 and asparagine 80. The segment at 75 to 104 (QSSASNDSDLETTVPPPTATSSPPREMSGL) is disordered. Residues 131–151 (YFPYLVVIHTLIFIICGNFWF) traverse the membrane as a helical segment. Residues 152-275 (KFPGTSSKIE…MRQTVLKVCK (124 aa)) lie on the Cytoplasmic side of the membrane. The interval 182–217 (EVSGESSQEKPNQERSIDRELSKPNFEEGSPATADL) is disordered. Basic and acidic residues predominate over residues 188-207 (SQEKPNQERSIDRELSKPNF). Residues 276 to 296 (FVLITIYNAVLVGKIHFIVPC) form a helical membrane-spanning segment. At 297 to 323 (SVHTEDMTGYNSFCCNHTKAHLFSKLA) the chain is on the extracellular side. An N-linked (GlcNAc...) asparagine glycan is attached at asparagine 312. A helical transmembrane segment spans residues 324-344 (ISYLCFLGVYGLTCFYTLYWL). Topologically, residues 345–806 (FRRPLKEYSF…VDVRDKFKED (462 aa)) are cytoplasmic. LRR repeat units follow at residues 569–589 (HLQK…NALK), 593–614 (LVKE…VFSL), 616–637 (NLQV…ISLQ), 641–662 (KLSV…IRKL), 664–685 (GLEE…LFLC), 687–708 (KLRH…IGVL), 710–731 (LLQY…LFFC), 733–754 (KLKT…VGSL), and 756–777 (CLVK…IGNC).

This sequence belongs to the LRRC8 family. Heterohexamer; oligomerizes with other LRRC8 proteins (lrrc8a, lrrc8c, lrrc8d and/or lrrc8b) to form a heterohexamer. Detected in a channel complex that contains lrrc8a, lrrc8c and lrrc8e. In vivo, the subunit composition may depend primarily on expression levels, and heterooligomeric channels containing various proportions of the different LRRC8 proteins may coexist.

Its subcellular location is the cell membrane. The protein localises to the endoplasmic reticulum membrane. It is found in the lysosome membrane. The catalysed reaction is chloride(in) = chloride(out). It carries out the reaction iodide(out) = iodide(in). The enzyme catalyses taurine(out) = taurine(in). It catalyses the reaction 2',3'-cGAMP(out) = 2',3'-cGAMP(in). Its function is as follows. Non-essential component of the volume-regulated anion channel (VRAC, also named VSOAC channel), an anion channel required to maintain a constant cell volume in response to extracellular or intracellular osmotic changes. The VRAC channel conducts iodide better than chloride and can also conduct organic osmolytes like taurine. Mediates efflux of amino acids, such as aspartate, in response to osmotic stress. The VRAC channel also mediates transport of immunoreactive cyclic dinucleotide GMP-AMP (2'-3'-cGAMP), an immune messenger produced in response to DNA virus in the cytosol. Channel activity requires lrrc8a plus at least one other family member (lrrc8b, lrrc8c, lrrc8d or lrrc8e); channel characteristics depend on the precise subunit composition. Also plays a role in lysosome homeostasis by forming functional lysosomal VRAC channels in response to low cytoplasmic ionic strength condition: lysosomal VRAC channels are necessary for the formation of large lysosome-derived vacuoles, which store and then expel excess water to maintain cytosolic water homeostasis. This chain is Volume-regulated anion channel subunit LRRC8E, found in Xenopus laevis (African clawed frog).